Consider the following 269-residue polypeptide: Tryptophan synthase alpha chain (269 aa).

Catalysis depends on proton acceptor residues Glu49 and Asp60.

It belongs to the TrpA family. In terms of assembly, tetramer of two alpha and two beta chains.

The enzyme catalyses (1S,2R)-1-C-(indol-3-yl)glycerol 3-phosphate + L-serine = D-glyceraldehyde 3-phosphate + L-tryptophan + H2O. Its pathway is amino-acid biosynthesis; L-tryptophan biosynthesis; L-tryptophan from chorismate: step 5/5. Its function is as follows. The alpha subunit is responsible for the aldol cleavage of indoleglycerol phosphate to indole and glyceraldehyde 3-phosphate. In Acidovorax ebreus (strain TPSY) (Diaphorobacter sp. (strain TPSY)), this protein is Tryptophan synthase alpha chain.